Here is a 346-residue protein sequence, read N- to C-terminus: Phosphate acyltransferase (346 aa).

Belongs to the PlsX family. As to quaternary structure, homodimer. Probably interacts with PlsY.

Its subcellular location is the cytoplasm. The catalysed reaction is a fatty acyl-[ACP] + phosphate = an acyl phosphate + holo-[ACP]. The protein operates within lipid metabolism; phospholipid metabolism. Functionally, catalyzes the reversible formation of acyl-phosphate (acyl-PO(4)) from acyl-[acyl-carrier-protein] (acyl-ACP). This enzyme utilizes acyl-ACP as fatty acyl donor, but not acyl-CoA. This chain is Phosphate acyltransferase, found in Brucella suis biovar 1 (strain 1330).